A 30-amino-acid polypeptide reads, in one-letter code: Kappa-sparatoxin-Hv1d (30 aa).

Intrachain disulfides connect Cys3/Cys17, Cys10/Cys22, and Cys16/Cys26.

In terms of tissue distribution, expressed by the venom gland.

The protein resides in the secreted. Inhibitor of voltage-gated potassium channels of the Kv4/KCND family. Blocks calcium channels (Cav). The chain is Kappa-sparatoxin-Hv1d from Heteropoda venatoria (Brown huntsman spider).